The primary structure comprises 372 residues: 4-hydroxy-3-methylbut-2-en-1-yl diphosphate synthase (flavodoxin) (372 aa).

Positions 270, 273, 305, and 312 each coordinate [4Fe-4S] cluster.

Belongs to the IspG family. Requires [4Fe-4S] cluster as cofactor.

It catalyses the reaction (2E)-4-hydroxy-3-methylbut-2-enyl diphosphate + oxidized [flavodoxin] + H2O + 2 H(+) = 2-C-methyl-D-erythritol 2,4-cyclic diphosphate + reduced [flavodoxin]. The protein operates within isoprenoid biosynthesis; isopentenyl diphosphate biosynthesis via DXP pathway; isopentenyl diphosphate from 1-deoxy-D-xylulose 5-phosphate: step 5/6. In terms of biological role, converts 2C-methyl-D-erythritol 2,4-cyclodiphosphate (ME-2,4cPP) into 1-hydroxy-2-methyl-2-(E)-butenyl 4-diphosphate. The protein is 4-hydroxy-3-methylbut-2-en-1-yl diphosphate synthase (flavodoxin) of Salmonella schwarzengrund (strain CVM19633).